The sequence spans 132 residues: Small ribosomal subunit protein uS9 (132 aa).

The interval 100–132 (LKSNGLLTRDDRTKERKKPGLKRARKAPQYTKR) is disordered. A compositionally biased stretch (basic residues) spans 114–132 (ERKKPGLKRARKAPQYTKR).

The protein belongs to the universal ribosomal protein uS9 family.

This is Small ribosomal subunit protein uS9 from Dehalococcoides mccartyi (strain ATCC BAA-2100 / JCM 16839 / KCTC 5957 / BAV1).